Here is a 115-residue protein sequence, read N- to C-terminus: U3-lycotoxin-Ls1d (115 aa).

Positions 1–20 (MKFVLLFGVLLVTLFSYSSA) are cleaved as a signal peptide. A propeptide spanning residues 21 to 44 (EMLDDFDQADEDELLSLIEKEEAR) is cleaved from the precursor. 4 disulfides stabilise this stretch: Cys48/Cys63, Cys55/Cys72, Cys62/Cys87, and Cys74/Cys85.

It belongs to the neurotoxin 19 (CSTX) family. 01 subfamily. Expressed by the venom gland.

The protein localises to the secreted. The protein is U3-lycotoxin-Ls1d of Lycosa singoriensis (Wolf spider).